The chain runs to 112 residues: Transmembrane protein 14 homolog (112 aa).

A helical transmembrane segment spans residues 3–23 (VDWFGYVYAATVAAGGIMGYA).

This sequence belongs to the TMEM14 family.

It localises to the membrane. In Drosophila melanogaster (Fruit fly), this protein is Transmembrane protein 14 homolog.